A 177-amino-acid chain; its full sequence is Adenine phosphoribosyltransferase (177 aa).

The protein belongs to the purine/pyrimidine phosphoribosyltransferase family. Homodimer.

The protein localises to the cytoplasm. The enzyme catalyses AMP + diphosphate = 5-phospho-alpha-D-ribose 1-diphosphate + adenine. It functions in the pathway purine metabolism; AMP biosynthesis via salvage pathway; AMP from adenine: step 1/1. Functionally, catalyzes a salvage reaction resulting in the formation of AMP, that is energically less costly than de novo synthesis. This chain is Adenine phosphoribosyltransferase, found in Mycoplasma pneumoniae (strain ATCC 29342 / M129 / Subtype 1) (Mycoplasmoides pneumoniae).